Reading from the N-terminus, the 295-residue chain is Ethanolamine ammonia-lyase small subunit (295 aa).

V207, E228, and C258 together coordinate adenosylcob(III)alamin.

This sequence belongs to the EutC family. In terms of assembly, the basic unit is a heterodimer which dimerizes to form tetramers. The heterotetramers trimerize; 6 large subunits form a core ring with 6 small subunits projecting outwards. It depends on adenosylcob(III)alamin as a cofactor.

It localises to the bacterial microcompartment. It carries out the reaction ethanolamine = acetaldehyde + NH4(+). The protein operates within amine and polyamine degradation; ethanolamine degradation. Catalyzes the deamination of various vicinal amino-alcohols to oxo compounds. Allows this organism to utilize ethanolamine as the sole source of nitrogen and carbon in the presence of external vitamin B12. In Escherichia coli (strain 55989 / EAEC), this protein is Ethanolamine ammonia-lyase small subunit.